The chain runs to 523 residues: Sporulation protein 23 (523 aa).

Interacts with SPO1 in meiosis.

In terms of biological role, regulates expression of PIS1. This is Sporulation protein 23 (SPO23) from Saccharomyces cerevisiae (strain ATCC 204508 / S288c) (Baker's yeast).